A 1325-amino-acid polypeptide reads, in one-letter code: MKEPLDGECGKAVVPQQELLDKIKEEPDNAQEYGCVQQPKTQESKLKIGGVSSVNERPIAQQLNPGFQLSFASSGPSVLLPSVPAVAIKVFCSGCKKMLYKGQTAYHKTGSTQLFCSTRCITRHSSPACLPPPPKKTCTNCSKDILNPKDVITTRFENSYPSKDFCSQSCLSSYELKKKPVVTIYTKSISTKCSMCQKNADTRFEVKYQNVVHGLCSDACFSKFHSTNNLTMNCCENCGSYCYSSSGPCQSQKVFSSTSVTAYKQNSAQIPPYALGKSLRPSAEMIETTNDSGKTELFCSINCLSAYRVKTVTSSGVQVSCHSCKTSAIPQYHLAMSNGTIYSFCSSSCVVAFQNVFSKPKGTNSSAVPLSQGQVVVSPPSSRSAVSIGGGNTSAVSPSSIRGSAAASLQPLAEQSQQVALTHTVVKLKCQHCNHLFATKPELLFYKGKMFLFCGKNCSDEYKKKNKVVAMCDYCKLQKIIKETVRFSGVDKPFCSEVCKFLSARDFGERWGNYCKMCSYCSQTSPNLVENRLEGKLEEFCCEDCMSKFTVLFYQMAKCDGCKRQGKLSESIKWRGNIKHFCNLFCVLEFCHQQIMNDCLPQNKVNISKAKTAVTELPSARTDTTPVITSVMSLAKIPATLSTGNTNSVLKGAVTKEAAKIIQDESTQEDAMKFPSSQSSQPSRLLKNKGISCKPVTQTKATSCKPHTQHKECQTDLPMPNEKNDAELDSPPSKKKRLGFFQTYDTEYLKVGFIICPGSKESSPRPQCVICGEILSSENMKPANLSHHLKTKHSELENKPVDFFEQKSLEMECQNSSLKKCLLVEKSLVKASYLIAFQTAASKKPFSIAEELIKPYLVEMCSEVLGSSAGDKMKTIPLSNVTIQHRIDELSADIEDQLIQKVRESKWFALQIDESSEISNITLLLCYIRFIDYDCRDVKEELLFCIEMPTQITGFEIFELINKYIDSKSLNWKHCVGLCTDGAASMTGRYSGLKAKIQEVAMNTAAFTHCFIHRERLVAEKLSPCLHKILLQSAQILSFIKSNALNSRMLTILCEEMGSEHVSLPLHAEVRWISRGRMLKRLFELRHEIEIFLSQKHSDLAKYFHDEEWVGKLAYLSDIFSLINELNLSLQGTLTTFFNLCNKIDVFKRKLKMWLKRTQENDYDMFPSFSEFSNSSGLNMTDITRIIFEHLEGLSQVFSDCFPPEQDLRSGNLWIIHPFMNHQNNNLTDFEEEKLTELSSDLGLQALFKSVSVTQFWINAKTSYPELHERAMKFLLPFSTVYLCDAAFSALTESKQKNLLGSGPALRLAVTSLIPRIEKLVKEKE.

8 MYM-type zinc fingers span residues 113–151 (QLFC…PKDV), 163–206 (KDFC…RFEV), 213–248 (HGLC…SSGP), 296–334 (ELFC…QYHL), 342–443 (YSFC…KPEL), 451–485 (FLFC…KETV), 492–531 (KPFC…LVEN), and 538–572 (EEFC…SESI). Ser-397 is modified (phosphoserine). Positions 665–733 (ESTQEDAMKF…NDAELDSPPS (69 aa)) are disordered. Residues 695 to 706 (PVTQTKATSCKP) are compositionally biased toward polar residues.

Expressed at high levels in heart, skeletal muscle, kidney and liver.

It localises to the nucleus. Its function is as follows. Plays a role in the regulation of cell morphology and cytoskeletal organization. This is Zinc finger MYM-type protein 6 (ZMYM6) from Homo sapiens (Human).